The sequence spans 118 residues: Large ribosomal subunit protein bL20 (118 aa).

Belongs to the bacterial ribosomal protein bL20 family.

Functionally, binds directly to 23S ribosomal RNA and is necessary for the in vitro assembly process of the 50S ribosomal subunit. It is not involved in the protein synthesizing functions of that subunit. The chain is Large ribosomal subunit protein bL20 from Elusimicrobium minutum (strain Pei191).